The chain runs to 309 residues: MPPNNSKYVLDPVSIKSVCGGEESYIRCVEYGKKKAHYSNLNLLAKAILAGMFVGLCAHASGIAGGLFYYHKLREIVGASMSVFVYGFTFPIAFMCIICTGSDLFTGNTLAVTMALYEKKVKLLDYLRVMTISLFGNYVGAVSFAFFVSYLSGAFTNVHAVEKNHFFQFLNDIAEKKVHHTFVECVSLAVGCNIFVCLAVYFVLTLKDGAGYVFSVFFAVYAFAIAGYEHIIANIYTLNIALMVNTKITVYQAYIKNLLPTLLGNYIAGAIVLGLPLYFIYKEHYYNFERSKRDNNDAQMKSLSIELRN.

Over 1 to 19 (MPPNNSKYVLDPVSIKSVC) the chain is Cytoplasmic. The helical intramembrane region spans 20–35 (GGEESYIRCVEYGKKK). Over 36–40 (AHYSN) the chain is Cytoplasmic. The helical transmembrane segment at 41–68 (LNLLAKAILAGMFVGLCAHASGIAGGLF) threads the bilayer. Topologically, residues 69-79 (YYHKLREIVGA) are extracellular. The chain crosses the membrane as a helical span at residues 80–100 (SMSVFVYGFTFPIAFMCIICT). The Cytoplasmic segment spans residues 101 to 122 (GSDLFTGNTLAVTMALYEKKVK). A helical membrane pass occupies residues 123-150 (LLDYLRVMTISLFGNYVGAVSFAFFVSY). Residues 151-163 (LSGAFTNVHAVEK) lie on the Extracellular side of the membrane. Positions 164–179 (NHFFQFLNDIAEKKVH) form an intramembrane region, helical. The Extracellular segment spans residues 180–181 (HT). Residues 182–206 (FVECVSLAVGCNIFVCLAVYFVLTL) form a helical membrane-spanning segment. Residues 207–209 (KDG) lie on the Cytoplasmic side of the membrane. Residues 210-226 (AGYVFSVFFAVYAFAIA) form a helical membrane-spanning segment. At 227–249 (GYEHIIANIYTLNIALMVNTKIT) the chain is on the extracellular side. A helical membrane pass occupies residues 250 to 280 (VYQAYIKNLLPTLLGNYIAGAIVLGLPLYFI). At 281–309 (YKEHYYNFERSKRDNNDAQMKSLSIELRN) the chain is on the cytoplasmic side.

This sequence belongs to the FNT transporter (TC 1.A.16) family. In terms of assembly, homopentamer.

It is found in the cell membrane. It localises to the vacuole membrane. The catalysed reaction is (S)-lactate(in) + H(+)(in) = (S)-lactate(out) + H(+)(out). It carries out the reaction formate(in) + H(+)(in) = formate(out) + H(+)(out). It catalyses the reaction pyruvate(out) + H(+)(out) = pyruvate(in) + H(+)(in). The enzyme catalyses acetate(out) + H(+)(out) = acetate(in) + H(+)(in). With respect to regulation, inhibited by diethylpyrocarbonate (DEPC). Protonophores, such as 2,4-dinitrophenol and carbonylcyanide-3-chlorophenylhydrazone, abolish transport. Inhibited by phloretin, furosemide, alpha-cyano-4-hydroxy-cinnamate and alpha-fluorocinnamate. Inhibited by the Malaria Box compound MMV007839 and its derivatives BH296 and BH267.meta. Inhibited by the Malaria Box compound MMV000972. Inhibited by broad-specificity anion transport inhibitor NPPB. In terms of biological role, monocarboxylate-proton symporter that mediates the efflux of the waste product lactate in the intraerythrocytic parasites; active in acidic-to-neutral pH range. Transports L-lactate. Transports D-lactate, pyruvate, acetate and formate. Essential for asexual growth but dispensable for the development of gametocytes. The sequence is that of Formate-nitrite transporter from Plasmodium falciparum (isolate 3D7).